A 488-amino-acid polypeptide reads, in one-letter code: Proline--tRNA ligase (488 aa).

It belongs to the class-II aminoacyl-tRNA synthetase family. ProS type 3 subfamily. As to quaternary structure, homodimer.

It localises to the cytoplasm. It carries out the reaction tRNA(Pro) + L-proline + ATP = L-prolyl-tRNA(Pro) + AMP + diphosphate. Catalyzes the attachment of proline to tRNA(Pro) in a two-step reaction: proline is first activated by ATP to form Pro-AMP and then transferred to the acceptor end of tRNA(Pro). The protein is Proline--tRNA ligase of Pyrobaculum aerophilum (strain ATCC 51768 / DSM 7523 / JCM 9630 / CIP 104966 / NBRC 100827 / IM2).